The primary structure comprises 239 residues: Orotidine 5'-phosphate decarboxylase (239 aa).

Substrate-binding positions include Asp15, Lys37, 64 to 73 (DLKFHDIPNT), Thr126, Arg187, Gln196, Gly216, and Arg217. Lys66 (proton donor) is an active-site residue.

The protein belongs to the OMP decarboxylase family. Type 1 subfamily. Homodimer.

It carries out the reaction orotidine 5'-phosphate + H(+) = UMP + CO2. It functions in the pathway pyrimidine metabolism; UMP biosynthesis via de novo pathway; UMP from orotate: step 2/2. Catalyzes the decarboxylation of orotidine 5'-monophosphate (OMP) to uridine 5'-monophosphate (UMP). The chain is Orotidine 5'-phosphate decarboxylase from Geobacter sulfurreducens (strain ATCC 51573 / DSM 12127 / PCA).